The sequence spans 354 residues: Peptide chain release factor 1 (354 aa).

Gln230 is modified (N5-methylglutamine).

It belongs to the prokaryotic/mitochondrial release factor family. Post-translationally, methylated by PrmC. Methylation increases the termination efficiency of RF1.

It is found in the cytoplasm. In terms of biological role, peptide chain release factor 1 directs the termination of translation in response to the peptide chain termination codons UAG and UAA. In Pelobacter propionicus (strain DSM 2379 / NBRC 103807 / OttBd1), this protein is Peptide chain release factor 1.